Consider the following 496-residue polypeptide: MASSTGDRSQAVRHGLRAKVLTLDGMNPRVRRVEYAVRGPIVQRALELEQELRQGVKKPFTEVIRANIGDAQAMGQRPITFLRQVLALCVNPDLLSSPNFPDDAKKRAERILQACGGHSLGAYSVSSGIQLIREDVARYIERRDGGIPADPNNVFLSTGASDAIVTVLKLLVAGEGHTRTGVLIPIPQYPLYSATLAELGAVQVDYYLDEERAWALDVAELHRALGQARDHCRPRALCVINPGNPTGQVQTRECIEAVIRFAFEERLFLLADEVYQDNVYAAGSQFHSFKKVLMEMGPPYAGQQELASFHSTSKGYMGECGFRGGYVEVVNMDAAVQQQMLKLMSVRLCPPVPGQALLDLVVSPPAPTDPSFAQFQAEKQAVLAELAAKAKLTEQVFNEAPGISCNPVQGAMYSFPRVQLPPRAVERAQELGLAPDMFFCLRLLEETGICVVPGSGFGQREGTYHFRMTILPPLEKLRLLLEKLSRFHAKFTLEYS.

At alanine 2 the chain carries N-acetylalanine. Residue threonine 22 is modified to Phosphothreonine. N6-(pyridoxal phosphate)lysine is present on lysine 314.

The protein belongs to the class-I pyridoxal-phosphate-dependent aminotransferase family. Alanine aminotransferase subfamily. Homodimer. It depends on pyridoxal 5'-phosphate as a cofactor. Liver, kidney, heart, and skeletal muscles. Expressed at moderate levels in the adipose tissue.

It is found in the cytoplasm. It catalyses the reaction L-alanine + 2-oxoglutarate = pyruvate + L-glutamate. Its pathway is amino-acid degradation; L-alanine degradation via transaminase pathway; pyruvate from L-alanine: step 1/1. In terms of biological role, catalyzes the reversible transamination between alanine and 2-oxoglutarate to form pyruvate and glutamate. Participates in cellular nitrogen metabolism and also in liver gluconeogenesis starting with precursors transported from skeletal muscles. The protein is Alanine aminotransferase 1 (GPT) of Homo sapiens (Human).